The primary structure comprises 999 residues: Protein Smaug (999 aa).

Over residues 1 to 37 (MKYATGTDNAMTSGISGQTNNSNSVSNEMQPTTSTPT) the composition is skewed to polar residues. Disordered regions lie at residues 1-45 (MKYA…EATS), 50-69 (TATY…QSQP), and 321-370 (CSSV…GSSS). Positions 321-338 (CSSVASSSMCPASGSRSS) are enriched in low complexity. Phosphoserine occurs at positions 564 and 575. The tract at residues 583 to 763 (EFKPNYIKFH…KDLKFKLSKM (181 aa)) is interaction with cup. Positions 600–654 (GIGLWLKSLRLHKYIELFKNMTYEEMLLITEDFLQSVGVTKGASHKLALCIDKLK) constitute an SAM domain. The interval 773–892 (HVKPAGVGPN…HHHAQQMQQM (120 aa)) is disordered. Composition is skewed to polar residues over residues 801-822 (KNGS…NFSL) and 854-864 (HQPQYKSSSYP). S972 is subject to Phosphoserine.

Belongs to the SMAUG family. Interacts with oskar (osk). Binds to the 3'-UTR of nos. Interacts with cup, which in turn recruits eIF4-E, leading to an indirect interaction between smg and eIF4-E that prevents mRNA translation.

The protein resides in the cytoplasm. Its function is as follows. Translation regulator that binds to the 3'-UTR of specific mRNAs such as nanos (nos) and prevent their translation. Prevents translation of unlocalized nos in the bulk cytoplasm via the recruitment of cup. This is Protein Smaug (smg) from Drosophila yakuba (Fruit fly).